A 336-amino-acid polypeptide reads, in one-letter code: DNA-directed RNA polymerase subunit alpha (336 aa).

The alpha N-terminal domain (alpha-NTD) stretch occupies residues 1–226; it reads MLIAQRPTLS…ELFGLARELN (226 aa). The segment at 243–336 is alpha C-terminal domain (alpha-CTD); the sequence is LAADMALPIE…SDDAFGDDEL (94 aa).

It belongs to the RNA polymerase alpha chain family. As to quaternary structure, homodimer. The RNAP catalytic core consists of 2 alpha, 1 beta, 1 beta' and 1 omega subunit. When a sigma factor is associated with the core the holoenzyme is formed, which can initiate transcription.

The enzyme catalyses RNA(n) + a ribonucleoside 5'-triphosphate = RNA(n+1) + diphosphate. DNA-dependent RNA polymerase catalyzes the transcription of DNA into RNA using the four ribonucleoside triphosphates as substrates. This chain is DNA-directed RNA polymerase subunit alpha, found in Renibacterium salmoninarum (strain ATCC 33209 / DSM 20767 / JCM 11484 / NBRC 15589 / NCIMB 2235).